A 181-amino-acid chain; its full sequence is Adenine phosphoribosyltransferase (181 aa).

The protein belongs to the purine/pyrimidine phosphoribosyltransferase family. In terms of assembly, homodimer.

It localises to the cytoplasm. The enzyme catalyses AMP + diphosphate = 5-phospho-alpha-D-ribose 1-diphosphate + adenine. It functions in the pathway purine metabolism; AMP biosynthesis via salvage pathway; AMP from adenine: step 1/1. Functionally, catalyzes a salvage reaction resulting in the formation of AMP, that is energically less costly than de novo synthesis. The polypeptide is Adenine phosphoribosyltransferase (Brucella abortus (strain S19)).